A 598-amino-acid polypeptide reads, in one-letter code: Elongation factor 4 (598 aa).

Positions 2–184 constitute a tr-type G domain; that stretch reads KNIRNFSIIA…EIVAKIPAPE (183 aa). GTP-binding positions include 14–19 and 131–134; these read DHGKST and NKID.

This sequence belongs to the TRAFAC class translation factor GTPase superfamily. Classic translation factor GTPase family. LepA subfamily.

It is found in the cell inner membrane. The catalysed reaction is GTP + H2O = GDP + phosphate + H(+). Its function is as follows. Required for accurate and efficient protein synthesis under certain stress conditions. May act as a fidelity factor of the translation reaction, by catalyzing a one-codon backward translocation of tRNAs on improperly translocated ribosomes. Back-translocation proceeds from a post-translocation (POST) complex to a pre-translocation (PRE) complex, thus giving elongation factor G a second chance to translocate the tRNAs correctly. Binds to ribosomes in a GTP-dependent manner. The polypeptide is Elongation factor 4 (Haemophilus influenzae (strain 86-028NP)).